The primary structure comprises 229 residues: Transcriptional regulatory protein YxdJ (229 aa).

In terms of domain architecture, Response regulatory spans 3–116 (KIMIVEDSED…IVLAKIKSQI (114 aa)). At Asp-52 the chain carries 4-aspartylphosphate. Residues 129–227 (EKVVEYAGVQ…VRGEGYQLRA (99 aa)) constitute a DNA-binding region (ompR/PhoB-type).

Post-translationally, phosphorylated by YxdK.

It localises to the cytoplasm. Functionally, probable member of the two-component regulatory system YxdK/YxdJ. Positively regulates the expression of the yxdLMyxeA operon by direct interaction with its promoter region. Could also indirectly regulate the expression of the dlt operon. This is Transcriptional regulatory protein YxdJ (yxdJ) from Bacillus subtilis (strain 168).